We begin with the raw amino-acid sequence, 323 residues long: Aquaporin-4 (323 aa).

Over 1-36 the chain is Cytoplasmic; that stretch reads MSDGAAARRWGKCGPPCSRESIMVAFKGVWTQAFWK. Residues C13 and C17 are each lipidated (S-palmitoyl cysteine). Residues 37–57 form a helical membrane-spanning segment; it reads AVTAEFLAMLIFVLLSVGSTI. Residues 58-69 are Extracellular-facing; that stretch reads NWGGSENPLPVD. The chain crosses the membrane as a helical span at residues 70–89; sequence MVLISLCFGLSIATMVQCFG. Residues 90–93 are Cytoplasmic-facing; sequence HISG. Positions 94–101 form an intramembrane region, discontinuously helical; that stretch reads GHINPAVT. An NPA 1 motif is present at residues 97-99; the sequence is NPA. The Cytoplasmic segment spans residues 102–115; the sequence is VAMVCTRKISIAKS. A Phosphoserine; by PKG modification is found at S111. The helical transmembrane segment at 116–136 threads the bilayer; that stretch reads VFYITAQCLGAIIGAGILYLV. The Extracellular segment spans residues 137–155; sequence TPPSVVGGLGVTTVHGNLT. N153 carries an N-linked (GlcNAc...) asparagine glycan. A helical membrane pass occupies residues 156-176; it reads AGHGLLVELIITFQLVFTIFA. Topologically, residues 177-184 are cytoplasmic; the sequence is SCDSKRTD. The residue at position 180 (S180) is a Phosphoserine; by PKC. The helical transmembrane segment at 185–205 threads the bilayer; sequence VTGSVALAIGFSVAIGHLFAI. The Extracellular segment spans residues 206 to 208; sequence NYT. The segment at residues 209-222 is an intramembrane region (discontinuously helical); sequence GASMNPARSFGPAV. Positions 213-215 match the NPA 2 motif; it reads NPA. Residues 223–231 lie on the Extracellular side of the membrane; that stretch reads IMGNWENHW. Residues 232–252 form a helical membrane-spanning segment; it reads IYWVGPIIGAVLAGALYEYVF. Residues 253 to 323 lie on the Cytoplasmic side of the membrane; the sequence is CPDVELKRRL…DSSGEVLSSV (71 aa). A phosphoserine mark is found at S276 and S285. T289 is subject to Phosphothreonine. At S321 the chain carries Phosphoserine.

The protein belongs to the MIP/aquaporin (TC 1.A.8) family. Homotetramer. The tetramers can form oligomeric arrays in membranes. The size of the oligomers differs between tissues and is smaller in skeletal muscle than in brain. Interaction between AQP4 oligomeric arrays in close-by cells can contribute to cell-cell adhesion. Part of a complex containing MLC1, TRPV4, HEPACAM and ATP1B1. Phosphorylation by PKC at Ser-180 promotes internalization from the cell membrane, reducing the conductance by 50%. Phosphorylation by PKG at Ser-111 in response to glutamate increases conductance by 40%. Post-translationally, isoform Long: Palmitoylated on its N-terminal region. Isoform 3: Not palmitoylated. As to expression, detected in cerebellum. Detected on pericapillary astrocyte endfeet in cerebellum, and in skeletal muscle. Detected in glial lamellae in the hypothalamus (at protein level). Abundant in mature brain cortex, cerebellum and spinal cord. Highly expressed in the ependymal cell lining the aqueductal system and over the space of the brain in contact with the subarachnoid space. Detected in paraventricular and supraoptic nuclei, the granule cell layer of the dentate gyrus and the Purkinje cell layer in the cerebellum. Only weakly detectable in eye, kidney, intestine, and lung.

It is found in the cell membrane. The protein localises to the basolateral cell membrane. Its subcellular location is the endosome membrane. The protein resides in the sarcolemma. It localises to the cell projection. The catalysed reaction is H2O(in) = H2O(out). Its function is as follows. Forms a water-specific channel. Plays an important role in brain water homeostasis and in glymphatic solute transport. Required for a normal rate of water exchange across the blood brain interface. Required for normal levels of cerebrospinal fluid influx into the brain cortex and parenchyma along paravascular spaces that surround penetrating arteries, and for normal drainage of interstitial fluid along paravenous drainage pathways. Thereby, it is required for normal clearance of solutes from the brain interstitial fluid, including soluble beta-amyloid peptides derived from APP. Plays a redundant role in urinary water homeostasis and urinary concentrating ability. This is Aquaporin-4 (Aqp4) from Rattus norvegicus (Rat).